A 129-amino-acid chain; its full sequence is Follitropin subunit beta (129 aa).

The signal sequence occupies residues 1–18 (MKSVQFCFLFCCWRATCC). Intrachain disulfides connect C21-C69, C35-C84, C38-C122, C46-C100, C50-C102, and C105-C112. N-linked (GlcNAc...) asparagine glycosylation is found at N25 and N42.

It belongs to the glycoprotein hormones subunit beta family. In terms of assembly, heterodimer. The active follitropin is a heterodimer composed of an alpha chain/CGA shared with other hormones and a unique beta chain/FSHB shown here.

It localises to the secreted. Together with the alpha chain CGA constitutes follitropin, the follicle-stimulating hormone, and provides its biological specificity to the hormone heterodimer. Binds FSHR, a G protein-coupled receptor, on target cells to activate downstream signaling pathways. Follitropin is involved in follicle development and spermatogenesis in reproductive organs. The protein is Follitropin subunit beta (FSHB) of Cervus nippon (Sika deer).